Reading from the N-terminus, the 496-residue chain is Probable malate:quinone oxidoreductase (496 aa).

It belongs to the MQO family. Requires FAD as cofactor.

The catalysed reaction is (S)-malate + a quinone = a quinol + oxaloacetate. It functions in the pathway carbohydrate metabolism; tricarboxylic acid cycle; oxaloacetate from (S)-malate (quinone route): step 1/1. The sequence is that of Probable malate:quinone oxidoreductase from Prochlorococcus marinus (strain NATL1A).